The chain runs to 505 residues: Probable RNA exonuclease NGL3 (505 aa).

Disordered stretches follow at residues 1–75 and 334–369; these read MDSQ…FPTP and RNGE…SFTA. Residues 10–23 are compositionally biased toward polar residues; that stretch reads SPSQKESSSTSGLV. The span at 36–54 shows a compositional bias: basic and acidic residues; sequence HRDQLSVDQIKKIREERAQ. Residue Ser-62 is modified to Phosphoserine. A compositionally biased stretch (acidic residues) spans 338 to 347; sequence ESDQDDEECD.

Belongs to the CCR4/nocturin family.

In Saccharomyces cerevisiae (strain ATCC 204508 / S288c) (Baker's yeast), this protein is Probable RNA exonuclease NGL3 (NGL3).